The sequence spans 1034 residues: Potassium-transporting ATPase alpha chain 1 (1034 aa).

Topologically, residues 2-97 (GKAENYELYQ…NALRPPRGTP (96 aa)) are cytoplasmic. A phosphotyrosine mark is found at Tyr-7 and Tyr-10. The interval 13-40 (ELGPGPSGDMAAKMSKKKAGRGGGKRKE) is disordered. Residues 26–39 (MSKKKAGRGGGKRK) show a composition bias toward basic residues. Ser-27 is modified (phosphoserine; by PKA and PKC). A helical membrane pass occupies residues 98-118 (EYVKFARQLAGGLQCLMWVAA). Residues 119–141 (AICLIAFAIQASEGDLTTDDNLY) lie on the Lumenal side of the membrane. Residues 142 to 162 (LALALIAVVVVTGCFGYYQEF) form a helical membrane-spanning segment. Residues 163 to 298 (KSTNIIASFK…NEKTPIAIEI (136 aa)) are Cytoplasmic-facing. The segment at 222–244 (KVDNSSLTGESEPQTRSPECTHE) is disordered. A compositionally biased stretch (polar residues) spans 225 to 239 (NSSLTGESEPQTRSP). Residues 299 to 318 (EHFVDIIAGLAILFGATFFI) traverse the membrane as a helical segment. At 319-330 (VAMCIGYTFLRA) the chain is on the lumenal side. Residues 331 to 348 (MVFFMAIVVAYVPEGLLA) traverse the membrane as a helical segment. The K(+) site is built by Val-339, Ala-340, Val-342, and Glu-344. Residues 349–782 (TVTVCLSLTA…EQGRLIFDNL (434 aa)) are Cytoplasmic-facing. The active-site 4-aspartylphosphate intermediate is Asp-386. Asp-386 and Thr-388 together coordinate Mg(2+). Ser-462 and Ser-600 each carry phosphoserine. Mg(2+) is bound by residues Asp-727 and Asp-731. The helical transmembrane segment at 783 to 802 (KKSIAYTLTKNIPELTPYLI) threads the bilayer. Glu-796 is a binding site for K(+). Residues 803-812 (YITVSVPLPL) are Lumenal-facing. The helical transmembrane segment at 813–833 (GCITILFIELCTDIFPSVSLA) threads the bilayer. Residue Glu-821 participates in K(+) binding. The Cytoplasmic portion of the chain corresponds to 834–853 (YEKAESDIMHLRPRNPKRDR). Residue Ser-839 is modified to Phosphoserine. A helical membrane pass occupies residues 854–876 (LVNEPLAAYSYFQIGAIQSFAGF). Residues 877-928 (TDYFTAMAQEGWFPLLCVGLRPQWENHHLQDLQDSYGQEWTFGQRLYQQYTC) lie on the Lumenal side of the membrane. Residues 929–948 (YTVFFISIEMCQIADVLIRK) form a helical membrane-spanning segment. Over 949 to 962 (TRRLSAFQQGFFRN) the chain is Cytoplasmic. Ser-953 carries the phosphoserine; by PKA modification. A helical membrane pass occupies residues 963-981 (RILVIAIVFQVCIGCFLCY). Topologically, residues 982–996 (CPGMPNIFNFMPIRF) are lumenal. Residues 997 to 1017 (QWWLVPMPFGLLIFVYDEIRK) traverse the membrane as a helical segment. The Cytoplasmic portion of the chain corresponds to 1018–1034 (LGVRCCPGSWWDQELYY).

Belongs to the cation transport ATPase (P-type) (TC 3.A.3) family. Type IIC subfamily. In terms of assembly, the gastric H(+)/K(+) ATPase pump is composed of the catalytic alpha subunit ATP4A and the regulatory beta subunit ATP4B. Interacts (via the P-domain) with ATP4B (via N-terminus); this interaction stabilizes the lumenal-open E2 conformation state and prevents the reverse reaction of the transport cycle.

The protein resides in the apical cell membrane. It is found in the cell membrane. It carries out the reaction K(+)(out) + ATP + H2O + H(+)(in) = K(+)(in) + ADP + phosphate + 2 H(+)(out). Down-regulated by K(+)-competitive acid blockers (P-CABs) such as vonoprazan. Functionally, the catalytic subunit of the gastric H(+)/K(+) ATPase pump which transports H(+) ions in exchange for K(+) ions across the apical membrane of parietal cells. Uses ATP as an energy source to pump H(+) ions to the gastric lumen while transporting K(+) ion from the lumen into the cell. Remarkably generates a million-fold proton gradient across the gastric parietal cell membrane, acidifying the gastric juice down to pH 1. Within a transport cycle, the transfer of a H(+) ion across the membrane is coupled to ATP hydrolysis and is associated with a transient phosphorylation that shifts the pump conformation from inward-facing (E1) to outward-facing state (E2). The release of the H(+) ion in the stomach lumen is followed by binding of K(+) ion converting the pump conformation back to the E1 state. This chain is Potassium-transporting ATPase alpha chain 1 (ATP4A), found in Sus scrofa (Pig).